A 219-amino-acid chain; its full sequence is Claudin-3 (219 aa).

Residues 1–8 (MSMGLEIT) lie on the Cytoplasmic side of the membrane. A helical membrane pass occupies residues 9-29 (GTSLAVLGWLCTIVCCALPMW). Topologically, residues 30-80 (RVSAFIGSSIITAQITWEGLWMNCVVQSTGQMQCKMYDSLLALPQDLQAAR) are extracellular. The helical transmembrane segment at 81-101 (ALIVVSILLAAFGLLVALVGA) threads the bilayer. Over 102–115 (QCTNCVQDETAKAK) the chain is Cytoplasmic. The helical transmembrane segment at 116-136 (ITIVAGVLFLLAALLTLVPVS) threads the bilayer. Residues 137–159 (WSANTIIRDFYNPLVPEAQKREM) are Extracellular-facing. Residues 160 to 180 (GAGLYVGWAAAALQLLGGALL) form a helical membrane-spanning segment. At 181 to 219 (CCSCPPRDKYAPTKILYSAPRSTGPGTGTGTAYDRKDYV) the chain is on the cytoplasmic side. Tyrosine 197 is modified (phosphotyrosine). Serine 198 bears the Phosphoserine mark. Residues 218–219 (YV) form an interactions with TJP1, TJP2 and TJP3 region.

The protein belongs to the claudin family. Can form homo- and heteropolymers with other CLDN. Homopolymers interact with CLDN1 and CLDN2 homopolymers. Interacts in cis (within the same plasma membrane) with CLDN19. Directly interacts with TJP1/ZO-1, TJP2/ZO-2 and TJP3/ZO-3. In terms of assembly, (Microbial infection) Interacts with Clostridium perfringens enterotoxin CPE; the interaction may disrupt claudin assembly in tight junctions. Expressed in the lung. Expressed at high levels in the liver and at lower levels, in kidney and testis.

The protein localises to the cell junction. Its subcellular location is the tight junction. It is found in the cell membrane. In terms of biological role, plays a major role in tight junction-specific obliteration of the intercellular space, through calcium-independent cell-adhesion activity. This Mus musculus (Mouse) protein is Claudin-3 (Cldn3).